The sequence spans 1180 residues: Protocadherin-12 (1180 aa).

The signal sequence occupies residues 1–17 (MMLLLPFLLGLLGPGSY). At 18–716 (LFISGDCQEV…HEPGVLSTPA (699 aa)) the chain is on the extracellular side. Cadherin domains lie at 28–135 (ATVM…QPQF), 136–244 (PKDE…SPVF), 245–352 (AESS…APSI), 355–460 (TWAS…APVF), and 461–565 (EKSR…APEV). N-linked (GlcNAc...) asparagine glycans are attached at residues asparagine 265 and asparagine 415. 3 N-linked (GlcNAc...) asparagine glycosylation sites follow: asparagine 582, asparagine 659, and asparagine 662. The region spanning 600–711 (PAGTGIPPKA…LRDSAHEPGV (112 aa)) is the Cadherin 6 domain. The helical transmembrane segment at 717–737 (LALICLAVLLAIFGLLLALFV) threads the bilayer. Residues 738 to 1180 (SICRTERKDN…ESRLGCGRNL (443 aa)) are Cytoplasmic-facing. 2 disordered regions span residues 857–930 (NASR…GPHQ) and 973–1026 (QFQP…PEED). At serine 859 the chain carries Phosphoserine. Residues 904–918 (PASSATLRRQRNFNG) show a composition bias toward polar residues. The segment covering 1014 to 1026 (PDLEEGPPSPEED) has biased composition (acidic residues). Residue serine 1064 is modified to Phosphoserine. Positions 1076–1093 (SSPDATTSEEPRTFQTFG) are enriched in polar residues. Disordered stretches follow at residues 1076-1104 (SSPD…ELSP) and 1156-1180 (SGAS…GRNL).

Post-translationally, N-glycosylated. Cleaved by ADAM10 close to the transmembrane domain to release the Protocadherin-12, secreted form in the serum. Cleavage results in reduced cellular adhesion in a cell migration assay. In terms of tissue distribution, expressed in endothelial cells: localizes in vasculogenic rather than angiogenic endothelium. Strongly expressed in a subset of invasive cells of the placenta, named glycogen-rich trophoblasts cells (at protein level). glycogen-rich trophoblasts cells originate from the from the ectoplacental cone where they rapidly form tight islets (at protein level). In adult mice, present at high level in mesangial cells of kidney glomeruli, while expression was not detected in other types of perivascular cells.

It is found in the cell membrane. Its subcellular location is the cell junction. The protein localises to the secreted. Functionally, cellular adhesion molecule that may play an important role in cell-cell interactions at interendothelial junctions. Acts as a regulator of cell migration, probably via increasing cell-cell adhesion. Promotes homotypic calcium-dependent aggregation and adhesion and clusters at intercellular junctions. Unable to bind to catenins, weakly associates with the cytoskeleton. The chain is Protocadherin-12 from Mus musculus (Mouse).